Reading from the N-terminus, the 633-residue chain is ATP-dependent clpX-like chaperone, mitochondrial (633 aa).

Residues 1-56 (MSSCGACTCGAAAARLLTTSLTSAQRGISCGRIHVPVLGRLGTLDTQILRRAPLRT) constitute a mitochondrion transit peptide. Residues 65 to 101 (ASKDGTNKDGSGDGNKKSVTEGSSKKSGSGNSGKGGN) form a disordered region. Residues 69–83 (GTNKDGSGDGNKKSV) are compositionally biased toward basic and acidic residues. Positions 84–93 (TEGSSKKSGS) are enriched in low complexity. A ClpX-type ZB domain is found at 93–146 (SGNSGKGGNQLRCPKCGDLCTHVETFVSSTRFVKCEKCHHFFVVLSEADSKKSI). Zn(2+) contacts are provided by C105, C108, C127, and C130. An ATP-binding site is contributed by 294–301 (PTGSGKTL). K437 carries the N6-acetyllysine modification. Residues 598-610 (KEPGYIRAPSKES) are compositionally biased toward basic and acidic residues. The interval 598-633 (KEPGYIRAPSKESSEEDYDSGVEEDGWPRQADAANS) is disordered. A compositionally biased stretch (acidic residues) spans 611-622 (SEEDYDSGVEED). The residue at position 617 (S617) is a Phosphoserine.

Belongs to the ClpX chaperone family. Homohexamer that forms a ring structure; this hexamerization requires ATP binding. Component of the ClpXP complex formed by the assembly of two CLPP heptameric rings with two CLPX hexameric rings, giving rise to a symmetrical structure with two central CLPP rings flanked by a CLPX ring at either end of the complex. Interacts with TFAM.

Its subcellular location is the mitochondrion. It is found in the mitochondrion matrix. The protein localises to the mitochondrion nucleoid. The enzyme catalyses ATP + H2O = ADP + phosphate + H(+). Functionally, ATP-dependent chaperone that functions as an unfoldase. As part of the ClpXP protease complex, it recognizes specific protein substrates, unfolds them using energy derived from ATP hydrolysis, and then translocates them to the proteolytic subunit (CLPP) of the ClpXP complex for degradation. Thanks to its chaperone activity, it also functions in the incorporation of the pyridoxal phosphate cofactor into 5-aminolevulinate synthase, thereby activating 5-aminolevulinate (ALA) synthesis, the first step in heme biosynthesis. This chaperone is also involved in the control of mtDNA nucleoid distribution, by regulating mitochondrial transcription factor A (TFAM) activity. This chain is ATP-dependent clpX-like chaperone, mitochondrial, found in Rattus norvegicus (Rat).